Here is a 288-residue protein sequence, read N- to C-terminus: 4-diphosphocytidyl-2-C-methyl-D-erythritol kinase (288 aa).

Residue Lys-11 is part of the active site. Pro-100–Ser-110 contacts ATP. Asp-140 is a catalytic residue.

Belongs to the GHMP kinase family. IspE subfamily.

The enzyme catalyses 4-CDP-2-C-methyl-D-erythritol + ATP = 4-CDP-2-C-methyl-D-erythritol 2-phosphate + ADP + H(+). Its pathway is isoprenoid biosynthesis; isopentenyl diphosphate biosynthesis via DXP pathway; isopentenyl diphosphate from 1-deoxy-D-xylulose 5-phosphate: step 3/6. Functionally, catalyzes the phosphorylation of the position 2 hydroxy group of 4-diphosphocytidyl-2C-methyl-D-erythritol. The polypeptide is 4-diphosphocytidyl-2-C-methyl-D-erythritol kinase (Wolbachia sp. subsp. Brugia malayi (strain TRS)).